The chain runs to 503 residues: Inosine-5'-monophosphate dehydrogenase 1 (503 aa).

Ser2 is modified (N-acetylserine). Residues 167 to 225 enclose the CBS domain; sequence MKSCDSSDYCVPWEIDFEKLEFVLEDKQKGFVVLERDGETVNVVTKDDIQRVKGYPKSG. Residues 265–267 and 315–317 contribute to the NAD(+) site; these read DSS and GMG. Residues Gly317 and Gly319 each contribute to the K(+) site. Position 320 (Ser320) interacts with IMP. Residue Cys322 coordinates K(+). Cys322 (thioimidate intermediate) is an active-site residue. Residues 355–357, 378–379, and 402–406 each bind IMP; these read DGG, GS, and YRGMG. The Proton acceptor role is filled by Arg418. Gln430 is an IMP binding site. The K(+) site is built by Glu489, Gly490, and Gly491.

Belongs to the IMPDH/GMPR family. As to quaternary structure, homotetramer. It depends on K(+) as a cofactor.

The protein resides in the cytoplasm. The enzyme catalyses IMP + NAD(+) + H2O = XMP + NADH + H(+). It participates in purine metabolism; XMP biosynthesis via de novo pathway; XMP from IMP: step 1/1. With respect to regulation, mycophenolic acid (MPA) is a non-competitive inhibitor that prevents formation of the closed enzyme conformation by binding to the same site as the amobile flap. In contrast, mizoribine monophosphate (MZP) is a competitive inhibitor that induces the closed conformation. MPA is a potent inhibitor of mammalian IMPDHs but a poor inhibitor of the bacterial enzymes. MZP is a more potent inhibitor of bacterial IMPDH. Catalyzes the conversion of inosine 5'-phosphate (IMP) to xanthosine 5'-phosphate (XMP), the first committed and rate-limiting step in the de novo synthesis of guanine nucleotides, and therefore plays an important role in the regulation of cell growth. The sequence is that of Inosine-5'-monophosphate dehydrogenase 1 from Arabidopsis thaliana (Mouse-ear cress).